The sequence spans 399 residues: Brefeldin A resistance protein (399 aa).

Composition is skewed to basic and acidic residues over residues 1-31 (MTSKMENNKDESISTKNALEEKSNETKDETS), 49-69 (SKSEPLEDKGNAEVKEFKETT), and 101-130 (KVEEKELKVNKDVDENEGHVAVETGKKESA). 2 disordered regions span residues 1 to 173 (MTSK…FGAF) and 191 to 269 (KKFA…SEII). Low complexity predominate over residues 138–157 (SPFSQFASFSNASSPFSNVS). Basic and acidic residues-rich tracts occupy residues 205–217 (SGKEKENDKKSSE) and 241–252 (TKSEPKEADKGS). Residues 253–263 (GDSTKSTMHQL) are compositionally biased toward polar residues. Residues 256–396 (TKSTMHQLSD…VLEAIPKGGR (141 aa)) enclose the RanBD1 domain.

Post-translationally, phosphorylated.

It localises to the nucleus. This chain is Brefeldin A resistance protein (hba1), found in Schizosaccharomyces pombe (strain 972 / ATCC 24843) (Fission yeast).